The following is a 447-amino-acid chain: Tubulin beta chain (447 aa).

Gln11, Glu69, Ser138, Gly142, Thr143, Gly144, Asn204, and Asn226 together coordinate GTP. Glu69 lines the Mg(2+) pocket. The interval 421–447 (EYQQYQDASISEGEEEYEEEAPMEPEE) is disordered. Residues 432-447 (EGEEEYEEEAPMEPEE) are compositionally biased toward acidic residues.

It belongs to the tubulin family. In terms of assembly, dimer of alpha and beta chains. A typical microtubule is a hollow water-filled tube with an outer diameter of 25 nm and an inner diameter of 15 nM. Alpha-beta heterodimers associate head-to-tail to form protofilaments running lengthwise along the microtubule wall with the beta-tubulin subunit facing the microtubule plus end conferring a structural polarity. Microtubules usually have 13 protofilaments but different protofilament numbers can be found in some organisms and specialized cells. The cofactor is Mg(2+).

The protein resides in the cytoplasm. Its subcellular location is the cytoskeleton. Its function is as follows. Tubulin is the major constituent of microtubules, a cylinder consisting of laterally associated linear protofilaments composed of alpha- and beta-tubulin heterodimers. Microtubules grow by the addition of GTP-tubulin dimers to the microtubule end, where a stabilizing cap forms. Below the cap, tubulin dimers are in GDP-bound state, owing to GTPase activity of alpha-tubulin. The chain is Tubulin beta chain from Rhynchosporium secalis (Barley scald fungus).